Reading from the N-terminus, the 149-residue chain is Transcriptional repressor NrdR (149 aa).

A zinc finger spans residues 3-34 (CPFCSIQETKVIDSRLVADGHQVRRRRECTMC). An ATP-cone domain is found at 49 to 139 (PRVVKRDGSR…VYRSFEDIRE (91 aa)).

It belongs to the NrdR family. Zn(2+) is required as a cofactor.

Negatively regulates transcription of bacterial ribonucleotide reductase nrd genes and operons by binding to NrdR-boxes. In Pseudoalteromonas atlantica (strain T6c / ATCC BAA-1087), this protein is Transcriptional repressor NrdR.